Consider the following 247-residue polypeptide: Enolase-phosphatase E1 (247 aa).

Mg(2+) is bound by residues Asp12 and Glu14. Substrate is bound by residues 141–142 (SS) and Lys175. Asp200 contributes to the Mg(2+) binding site.

It belongs to the HAD-like hydrolase superfamily. MasA/MtnC family. As to quaternary structure, monomer. The cofactor is Mg(2+).

The protein localises to the cytoplasm. The protein resides in the nucleus. It catalyses the reaction 5-methylsulfanyl-2,3-dioxopentyl phosphate + H2O = 1,2-dihydroxy-5-(methylsulfanyl)pent-1-en-3-one + phosphate. It functions in the pathway amino-acid biosynthesis; L-methionine biosynthesis via salvage pathway; L-methionine from S-methyl-5-thio-alpha-D-ribose 1-phosphate: step 3/6. It participates in amino-acid biosynthesis; L-methionine biosynthesis via salvage pathway; L-methionine from S-methyl-5-thio-alpha-D-ribose 1-phosphate: step 4/6. Functionally, bifunctional enzyme that catalyzes the enolization of 2,3-diketo-5-methylthiopentyl-1-phosphate (DK-MTP-1-P) into the intermediate 2-hydroxy-3-keto-5-methylthiopentenyl-1-phosphate (HK-MTPenyl-1-P), which is then dephosphorylated to form the acireductone 1,2-dihydroxy-3-keto-5-methylthiopentene (DHK-MTPene). The polypeptide is Enolase-phosphatase E1 (Drosophila willistoni (Fruit fly)).